Consider the following 132-residue polypeptide: uncharacterized protein (132 aa).

The interval 17 to 75 (RSAVPRWPHLSSQSGVEPPDRWTGTPGWPSRDQEAPGSMMPPAAAQPSAHGALVPPATA) is disordered. Residues 51-65 (APGSMMPPAAAQPSA) show a composition bias toward low complexity.

In terms of tissue distribution, expressed exclusively in heart.

It localises to the cytoplasm. This is an uncharacterized protein from Homo sapiens (Human).